We begin with the raw amino-acid sequence, 149 residues long: MERTLIIVKPDAVQRGLVGEVLRRLEQRGLRFVGLKLMKVDREVAERHYAEHRGKPFYEDLLAFITSGPVVVGVVEGPRAIEITRKTMGKTDPAQAEPGTIRGDLALTIGQNVIHGSDSPEKASYEIGLFFREDELVSYERAIDRWIMG.

ATP is bound by residues lysine 9, phenylalanine 57, arginine 85, threonine 91, arginine 102, and asparagine 112. The active-site Pros-phosphohistidine intermediate is the histidine 115.

This sequence belongs to the NDK family. In terms of assembly, homotetramer. Mg(2+) is required as a cofactor.

Its subcellular location is the cytoplasm. The catalysed reaction is a 2'-deoxyribonucleoside 5'-diphosphate + ATP = a 2'-deoxyribonucleoside 5'-triphosphate + ADP. It catalyses the reaction a ribonucleoside 5'-diphosphate + ATP = a ribonucleoside 5'-triphosphate + ADP. In terms of biological role, major role in the synthesis of nucleoside triphosphates other than ATP. The ATP gamma phosphate is transferred to the NDP beta phosphate via a ping-pong mechanism, using a phosphorylated active-site intermediate. This chain is Nucleoside diphosphate kinase, found in Thermomicrobium roseum (strain ATCC 27502 / DSM 5159 / P-2).